A 151-amino-acid polypeptide reads, in one-letter code: Aspartate 1-decarboxylase (151 aa).

The Schiff-base intermediate with substrate; via pyruvic acid role is filled by Ser-26. Ser-26 is subject to Pyruvic acid (Ser). Thr-58 is a binding site for substrate. Residue Tyr-59 is the Proton donor of the active site. Residue Gly-74 to Ala-76 coordinates substrate.

Belongs to the PanD family. As to quaternary structure, heterooctamer of four alpha and four beta subunits. It depends on pyruvate as a cofactor. In terms of processing, is synthesized initially as an inactive proenzyme, which is activated by self-cleavage at a specific serine bond to produce a beta-subunit with a hydroxyl group at its C-terminus and an alpha-subunit with a pyruvoyl group at its N-terminus.

The protein resides in the cytoplasm. The catalysed reaction is L-aspartate + H(+) = beta-alanine + CO2. It participates in cofactor biosynthesis; (R)-pantothenate biosynthesis; beta-alanine from L-aspartate: step 1/1. Functionally, catalyzes the pyruvoyl-dependent decarboxylation of aspartate to produce beta-alanine. This is Aspartate 1-decarboxylase from Crocosphaera subtropica (strain ATCC 51142 / BH68) (Cyanothece sp. (strain ATCC 51142)).